The primary structure comprises 266 residues: N-acetylneuraminate lyase B (266 aa).

Residues Thr-51 and Thr-52 each coordinate aceneuramate. Residue Tyr-143 is the Proton donor of the active site. The Schiff-base intermediate with substrate role is filled by Lys-173. Ser-175, Gly-197, Asp-199, Glu-200, and Ser-216 together coordinate aceneuramate.

Belongs to the DapA family. NanA subfamily. As to quaternary structure, homotetramer.

It is found in the cytoplasm. It carries out the reaction aceneuramate = aldehydo-N-acetyl-D-mannosamine + pyruvate. It participates in amino-sugar metabolism; N-acetylneuraminate degradation. Its function is as follows. Catalyzes the cleavage of N-acetylneuraminic acid (sialic acid) to form pyruvate and N-acetylmannosamine via a Schiff base intermediate. It prevents sialic acids from being recycled and returning to the cell surface. Involved in the N-glycolylneuraminic acid (Neu5Gc) degradation pathway. The polypeptide is N-acetylneuraminate lyase B (npl-b) (Xenopus laevis (African clawed frog)).